Reading from the N-terminus, the 122-residue chain is Acidic phospholipase A2 5 (122 aa).

Disulfide bonds link Cys26/Cys115, Cys28/Cys44, Cys43/Cys95, Cys49/Cys122, Cys50/Cys88, Cys57/Cys81, and Cys75/Cys86. Positions 27, 29, and 31 each coordinate Ca(2+). The active site involves His47. Residue Asp48 participates in Ca(2+) binding. Asp89 is an active-site residue.

This sequence belongs to the phospholipase A2 family. Group II subfamily. D49 sub-subfamily. In terms of assembly, monomer (predominant). Non-covalently linked homodimers are also observed. Requires Ca(2+) as cofactor. In terms of tissue distribution, expressed by the venom gland.

The protein localises to the secreted. It catalyses the reaction a 1,2-diacyl-sn-glycero-3-phosphocholine + H2O = a 1-acyl-sn-glycero-3-phosphocholine + a fatty acid + H(+). Its activity is regulated as follows. Preincubation with heparin slightly increase the enzymatic activity. Functionally, snake venom phospholipase A2 (PLA2) that inhibits platelet aggregation induced by ADP, arachidonic acid and PAF. Acts in a enzymatic independent manner on a proteinase-activated receptor (PAR1, F2R) to evoke calcium release through the inositol 1,4,5-trisphosphate receptor (ITPR1, IP3R) and induces mouse aorta contraction. PAR1, phospholipase C and IP3R inhibitors suppress PA2-induced aorta contraction. PLA2 catalyzes the calcium-dependent hydrolysis of the 2-acyl groups in 3-sn-phosphoglycerides. The polypeptide is Acidic phospholipase A2 5 (Trimeresurus stejnegeri (Chinese green tree viper)).